Here is a 29-residue protein sequence, read N- to C-terminus: Cytochrome b6-f complex subunit 8 (29 aa).

Residues 3 to 23 form a helical membrane-spanning segment; sequence IVSLAWAALMVVFTFSLSLVV.

The protein belongs to the PetN family. The 4 large subunits of the cytochrome b6-f complex are cytochrome b6, subunit IV (17 kDa polypeptide, PetD), cytochrome f and the Rieske protein, while the 4 small subunits are PetG, PetL, PetM and PetN. The complex functions as a dimer.

The protein resides in the plastid. The protein localises to the chloroplast thylakoid membrane. Functionally, component of the cytochrome b6-f complex, which mediates electron transfer between photosystem II (PSII) and photosystem I (PSI), cyclic electron flow around PSI, and state transitions. This chain is Cytochrome b6-f complex subunit 8, found in Solanum bulbocastanum (Wild potato).